Reading from the N-terminus, the 301-residue chain is MKFLSFRHEGQTSYGVKVKREEAAWDLKKVFADFAEGSFHPKTLLNGLQQNQVVDFQEQVRKAVVAAEDSGKGEDYKVQFSDIEFLPPVTPTNNVIAFGRNYQDHANELNHEVQRLYVFTKAASSLTGDNSTIPNHKDITDQLDYEGELGIVIGKSGEKIPKGLALDYVYGYTIINDITDRKAQNAQDQAFLSKSLTGGCPVGPYIVTKDELPTPEDVNIVTKVNNDIRQDGNTGQMILKIDELIEEISKYVALHPGDIIATGTPAGVGAGMNPPQFLQPGDEIKVTIDNIGTLTNFIADK.

A divalent metal cation is bound by residues E146, E148, and D177.

This sequence belongs to the FAH family.

This is an uncharacterized protein from Staphylococcus saprophyticus subsp. saprophyticus (strain ATCC 15305 / DSM 20229 / NCIMB 8711 / NCTC 7292 / S-41).